The primary structure comprises 278 residues: MAVSTFSSPTPVFGIAEPPASFSSTAIGWKQPLRFRRTKKPRVISCDYSCIEVRDVCYRPPGTQLNILNGVNFSLREKSFGLIFGKSGSGKTTLLQLLAGLNKPTSGSICIQGYGDDGQPKADPDLLPTEKVGIVFQFPERFFVADNVLDEITFGWPRQKGSLQLKEQLTSNLQRAFNWVGLDSIPLDKDPQLLSGGYKRRLALAIQLVQTPDLLILDEPLAGLDWKARADVAKLLKHLKKELTLLVVSHDLRELAALVDQSWRMETGGVLVAERPPL.

The transit peptide at 1 to 49 (MAVSTFSSPTPVFGIAEPPASFSSTAIGWKQPLRFRRTKKPRVISCDYS) directs the protein to the chloroplast. The ABC transporter domain maps to 51 to 278 (IEVRDVCYRP…GVLVAERPPL (228 aa)). 85–92 (GKSGSGKT) contributes to the ATP binding site.

This sequence belongs to the ABC transporter superfamily. ABCI family.

It localises to the plastid. The protein resides in the chloroplast. This chain is ABC transporter I family member 11, chloroplastic (ABCI11), found in Arabidopsis thaliana (Mouse-ear cress).